A 734-amino-acid chain; its full sequence is Photosystem I P700 chlorophyll a apoprotein A2 (734 aa).

A run of 8 helical transmembrane segments spans residues 46-69 (IFASHFGQLAIIFLWTSGNLFHVA), 135-158 (LYTGALFLLFLSAISLIAGWLHLQ), 175-199 (LNHHLSGLFGVSSLAWTGHLVHVAI), 273-291 (IAHHHLAIAFIFLVAGHMY), 330-353 (IHFQLGLALASLGVITSLVAQHMY), 369-395 (AALYTHHQYIAGFIMTGAFAHGAIFFI), 417-439 (AIISHLSWASLFLGFHTLGLYVH), and 517-535 (FLVHHAIALGLHTTTLILV). [4Fe-4S] cluster contacts are provided by C559 and C568. Helical transmembrane passes span 575-596 (AFYLAVFWMLNTIGWVTFYWHW) and 643-665 (LSVWAWMFLFGHLVWATGFMFLI). Residues H654, M662, and Y670 each contribute to the chlorophyll a site. W671 is a phylloquinone binding site. A helical membrane pass occupies residues 707–727 (LVGLAHFSVGYIFTYAAFLIA).

This sequence belongs to the PsaA/PsaB family. In terms of assembly, the PsaA/B heterodimer binds the P700 chlorophyll special pair and subsequent electron acceptors. PSI consists of a core antenna complex that captures photons, and an electron transfer chain that converts photonic excitation into a charge separation. The eukaryotic PSI reaction center is composed of at least 11 subunits. It depends on P700 is a chlorophyll a/chlorophyll a' dimer, A0 is one or more chlorophyll a, A1 is one or both phylloquinones and FX is a shared 4Fe-4S iron-sulfur center. as a cofactor.

It localises to the plastid. The protein localises to the chloroplast thylakoid membrane. The enzyme catalyses reduced [plastocyanin] + hnu + oxidized [2Fe-2S]-[ferredoxin] = oxidized [plastocyanin] + reduced [2Fe-2S]-[ferredoxin]. Functionally, psaA and PsaB bind P700, the primary electron donor of photosystem I (PSI), as well as the electron acceptors A0, A1 and FX. PSI is a plastocyanin-ferredoxin oxidoreductase, converting photonic excitation into a charge separation, which transfers an electron from the donor P700 chlorophyll pair to the spectroscopically characterized acceptors A0, A1, FX, FA and FB in turn. Oxidized P700 is reduced on the lumenal side of the thylakoid membrane by plastocyanin. The protein is Photosystem I P700 chlorophyll a apoprotein A2 of Calycanthus floridus var. glaucus (Eastern sweetshrub).